Reading from the N-terminus, the 612-residue chain is uncharacterized protein (612 aa).

The protein localises to the plastid. Its subcellular location is the chloroplast. This is an uncharacterized protein from Pyropia yezoensis (Susabi-nori).